The primary structure comprises 327 residues: tRNA(Ile)-lysidine synthase (327 aa).

Residue 32-37 coordinates ATP; the sequence is SGGQDS.

This sequence belongs to the tRNA(Ile)-lysidine synthase family.

It is found in the cytoplasm. It catalyses the reaction cytidine(34) in tRNA(Ile2) + L-lysine + ATP = lysidine(34) in tRNA(Ile2) + AMP + diphosphate + H(+). Its function is as follows. Ligates lysine onto the cytidine present at position 34 of the AUA codon-specific tRNA(Ile) that contains the anticodon CAU, in an ATP-dependent manner. Cytidine is converted to lysidine, thus changing the amino acid specificity of the tRNA from methionine to isoleucine. This Synechococcus sp. (strain JA-2-3B'a(2-13)) (Cyanobacteria bacterium Yellowstone B-Prime) protein is tRNA(Ile)-lysidine synthase.